An 887-amino-acid chain; its full sequence is PAN2-PAN3 deadenylation complex subunit PAN3 (887 aa).

The C3H1-type zinc-finger motif lies at 43 to 71 (GVKLKYCRYYAKDKTCFYGEECQFLHEDP). 3 disordered regions span residues 102–147 (AVAG…IPGM), 284–307 (QTPN…SNVS), and 325–392 (SPAT…SGQV). A compositionally biased stretch (gly residues) spans 122 to 138 (PGTGAAAGGGGSSGGLD). Residues 147–498 (MDGGALTDTS…PPPNRIQKSS (352 aa)) are necessary and sufficient for interaction with PABPC1 but not needed for interaction with PAN2. Residues 284 to 299 (QTPNPTASEFIPKGGS) carry the PABPC-interacting motif-2 (PAM-2) motif. A compositionally biased stretch (polar residues) spans 298 to 307 (GSTSRLSNVS). Phosphoserine occurs at positions 354 and 361. A compositionally biased stretch (polar residues) spans 363-392 (TPNPASYMVPSSASTSVNNPVSQTPSSGQV). Residues 463–750 (QIDQADMPAV…SVNDIMPMIG (288 aa)) form a pseudokinase domain region. Residues arginine 521, 570-577 (DFHAGGET), and 644-645 (TK) each bind ATP. The stretch at 751–789 (ARFYTQLDAAQMRNDVIEEDLAKEVQNGRLFRLLAKLGT) forms a coiled coil. Residues 790–887 (INERPEFQKD…ELIAAANGQL (98 aa)) form a knob domain region.

It belongs to the protein kinase superfamily. PAN3 family. Homodimer. Forms a heterotrimer with a catalytic subunit PAN2 to form the poly(A)-nuclease (PAN) deadenylation complex. Interacts (via PAM-2 motif) with poly(A)-binding protein PABPC1 (via PABC domain), conferring substrate specificity of the enzyme complex. Interacts with the GW182 family proteins TNRC6A, TNRC6B and TNRC6. Interacts with YTHDF3. As to quaternary structure, interacts with PAN2. Interacts (via N-terminus) with PABPC1 at lower efficiency than isoform 3. In terms of assembly, interacts with PAN2. Interacts (via N-terminus) with PABPC1 at higher efficiency than isoform 1.

The protein localises to the cytoplasm. Its subcellular location is the P-body. It localises to the nucleus. Functionally, regulatory subunit of the poly(A)-nuclease (PAN) deadenylation complex, one of two cytoplasmic mRNA deadenylases involved in general and miRNA-mediated mRNA turnover. PAN specifically shortens poly(A) tails of RNA and the activity is stimulated by poly(A)-binding protein (PABP). PAN deadenylation is followed by rapid degradation of the shortened mRNA tails by the CCR4-NOT complex. Deadenylated mRNAs are then degraded by two alternative mechanisms, namely exosome-mediated 3'-5' exonucleolytic degradation, or deadenylation-dependent mRNA decapping and subsequent 5'-3' exonucleolytic degradation by XRN1. PAN3 acts as a regulator for PAN activity, recruiting the catalytic subunit PAN2 to mRNA via its interaction with RNA and PABP, and to miRNA targets via its interaction with GW182 family proteins. In terms of biological role, decreases PAN2-mediated deadenylation, possibly by preventing progression into the second CCR4-NOT mediated stage of biphasic deadenylation. Has a significant effect on mRNA stability, generally stabilizing a subset of the transcriptome. Stabilizes mRNAs degraded by the AU-rich element (ARE)-mediated mRNA decay pathway but promotes degradation of mRNAs by the microRNA-mediated pathway. Its activity influences mRNP remodeling, specifically reducing formation of a subset of P-bodies containing GW220, an isoform of TNRC6A. Its function is as follows. Enhances PAN2 deadenylase activity and has an extensive effect on mRNA stability, generally enhancing mRNA decay across the transcriptome by multiple pathways, including the AU-rich element (ARE)-mediated pathway, microRNA-mediated pathway and the nonsense-mediated pathway (NMD). Its activity is required for efficient P-body formation. May be involved in regulating mRNAs of genes involved in cell cycle progression and cell proliferation. The sequence is that of PAN2-PAN3 deadenylation complex subunit PAN3 from Homo sapiens (Human).